The primary structure comprises 316 residues: tRNA dimethylallyltransferase (316 aa).

17–24 (GPTASGKT) lines the ATP pocket. Residue 19-24 (TASGKT) coordinates substrate. Interaction with substrate tRNA regions lie at residues 42 to 45 (DSAL), 166 to 170 (QRLSR), and 247 to 252 (RCVGYR).

It belongs to the IPP transferase family. As to quaternary structure, monomer. Mg(2+) serves as cofactor.

The enzyme catalyses adenosine(37) in tRNA + dimethylallyl diphosphate = N(6)-dimethylallyladenosine(37) in tRNA + diphosphate. In terms of biological role, catalyzes the transfer of a dimethylallyl group onto the adenine at position 37 in tRNAs that read codons beginning with uridine, leading to the formation of N6-(dimethylallyl)adenosine (i(6)A). The sequence is that of tRNA dimethylallyltransferase from Salmonella schwarzengrund (strain CVM19633).